The following is a 358-amino-acid chain: Peptide chain release factor 1 (358 aa).

Gln-233 is subject to N5-methylglutamine.

Belongs to the prokaryotic/mitochondrial release factor family. Post-translationally, methylated by PrmC. Methylation increases the termination efficiency of RF1.

Its subcellular location is the cytoplasm. Its function is as follows. Peptide chain release factor 1 directs the termination of translation in response to the peptide chain termination codons UAG and UAA. The chain is Peptide chain release factor 1 from Staphylococcus haemolyticus (strain JCSC1435).